A 338-amino-acid polypeptide reads, in one-letter code: DNA-directed RNA polymerase subunit alpha (338 aa).

Positions 1–233 (MYKNWRELIK…EQLQIFINFD (233 aa)) are alpha N-terminal domain (alpha-NTD). The alpha C-terminal domain (alpha-CTD) stretch occupies residues 250–338 (INENLYRSVE…KMIQEGKEDL (89 aa)).

It belongs to the RNA polymerase alpha chain family. As to quaternary structure, homodimer. The RNAP catalytic core consists of 2 alpha, 1 beta, 1 beta' and 1 omega subunit. When a sigma factor is associated with the core the holoenzyme is formed, which can initiate transcription.

The enzyme catalyses RNA(n) + a ribonucleoside 5'-triphosphate = RNA(n+1) + diphosphate. Its function is as follows. DNA-dependent RNA polymerase catalyzes the transcription of DNA into RNA using the four ribonucleoside triphosphates as substrates. This is DNA-directed RNA polymerase subunit alpha from Syntrophotalea carbinolica (strain DSM 2380 / NBRC 103641 / GraBd1) (Pelobacter carbinolicus).